Reading from the N-terminus, the 431-residue chain is ORC1-type DNA replication protein 14 (431 aa).

Residues 62 to 66, Tyr219, and Arg231 contribute to the ATP site; that span reads TGKSL.

Belongs to the CDC6/cdc18 family.

Functionally, involved in regulation of DNA replication. The sequence is that of ORC1-type DNA replication protein 14 (cdc6n) from Haloarcula marismortui (strain ATCC 43049 / DSM 3752 / JCM 8966 / VKM B-1809) (Halobacterium marismortui).